Consider the following 118-residue polypeptide: V-type proton ATPase subunit G 2 (118 aa).

A disordered region spans residues Arg26–Arg90. Over residues Gln35–Phe55 the composition is skewed to basic and acidic residues. Polar residues-rich tracts occupy residues Gln56–Leu69 and Arg78–Gln89.

This sequence belongs to the V-ATPase G subunit family. In terms of assembly, V-ATPase is a heteromultimeric enzyme made up of two complexes: the ATP-hydrolytic V1 complex and the proton translocation V0 complex. The V1 complex consists of three catalytic AB heterodimers that form a heterohexamer, three peripheral stalks each consisting of EG heterodimers, one central rotor including subunits D and F, and the regulatory subunits C and H. The proton translocation complex V0 consists of the proton transport subunit a, a ring of proteolipid subunits c9c'', rotary subunit d, subunits e and f, and the accessory subunits ATP6AP1/Ac45 and ATP6AP2/PRR.

Its subcellular location is the melanosome. The protein resides in the cytoplasmic vesicle. It is found in the clathrin-coated vesicle membrane. Functionally, subunit of the V1 complex of vacuolar(H+)-ATPase (V-ATPase), a multisubunit enzyme composed of a peripheral complex (V1) that hydrolyzes ATP and a membrane integral complex (V0) that translocates protons. V-ATPase is responsible for acidifying and maintaining the pH of intracellular compartments and in some cell types, is targeted to the plasma membrane, where it is responsible for acidifying the extracellular environment. In Sus scrofa (Pig), this protein is V-type proton ATPase subunit G 2 (ATP6V1G2).